A 442-amino-acid polypeptide reads, in one-letter code: Type 3 secretion system ATPase (442 aa).

Position 173-178 (173-178 (GVGKST)) interacts with ATP.

Belongs to the ATPase alpha/beta chains family. T3SS ATPase subfamily. As to quaternary structure, the core secretion machinery of the T3SS is composed of approximately 20 different proteins, including cytoplasmic components, a base, an export apparatus and a needle. This subunit is part of the cytosolic complex. Forms homohexamers.

It localises to the cytoplasm. The catalysed reaction is ATP + H2O + cellular proteinSide 1 = ADP + phosphate + cellular proteinSide 2.. Functionally, ATPase component of the type III secretion system (T3SS), also called injectisome, which is used to inject bacterial effector proteins into eukaryotic host cells. Acts as a molecular motor to provide the energy that is required for the export of proteins. Required for type III secretion apparatus (T3SA) formation, proper protein secretion, host cell invasion and virulence. May play a critical role in T3SS substrate recognition, disassembly of the effector/chaperone complex and unfolding of the effector in an ATP-dependent manner prior to secretion. The chain is Type 3 secretion system ATPase from Xanthomonas euvesicatoria.